The primary structure comprises 502 residues: Glycerol kinase (502 aa).

An ADP-binding site is contributed by Thr14. ATP-binding residues include Thr14, Thr15, and Ser16. Sn-glycerol 3-phosphate is bound at residue Thr14. An ADP-binding site is contributed by Arg18. Sn-glycerol 3-phosphate-binding residues include Arg84, Glu85, Tyr136, and Asp246. Positions 84, 85, 136, 246, and 247 each coordinate glycerol. The ADP site is built by Thr268 and Gly311. Residues Thr268, Gly311, Gln315, and Gly412 each coordinate ATP. ADP-binding residues include Gly412 and Asn416.

This sequence belongs to the FGGY kinase family. Homotetramer and homodimer (in equilibrium). Heterodimer with EIIA-Glc. Binds 1 zinc ion per glycerol kinase EIIA-Glc dimer. The zinc ion is important for dimerization.

It catalyses the reaction glycerol + ATP = sn-glycerol 3-phosphate + ADP + H(+). Its pathway is polyol metabolism; glycerol degradation via glycerol kinase pathway; sn-glycerol 3-phosphate from glycerol: step 1/1. Activity of this regulatory enzyme is affected by several metabolites. Allosterically and non-competitively inhibited by fructose 1,6-bisphosphate (FBP) and unphosphorylated phosphocarrier protein EIIA-Glc (III-Glc), an integral component of the bacterial phosphotransferase (PTS) system. Functionally, key enzyme in the regulation of glycerol uptake and metabolism. Catalyzes the phosphorylation of glycerol to yield sn-glycerol 3-phosphate. The chain is Glycerol kinase from Escherichia coli O81 (strain ED1a).